Reading from the N-terminus, the 213-residue chain is Kynurenine formamidase (213 aa).

Substrate is bound at residue W18. Positions 48, 52, and 54 each coordinate Zn(2+). H58 functions as the Proton donor/acceptor in the catalytic mechanism. Positions 160 and 172 each coordinate Zn(2+).

The protein belongs to the Cyclase 1 superfamily. KynB family. Homodimer. Requires Zn(2+) as cofactor.

The enzyme catalyses N-formyl-L-kynurenine + H2O = L-kynurenine + formate + H(+). The protein operates within amino-acid degradation; L-tryptophan degradation via kynurenine pathway; L-kynurenine from L-tryptophan: step 2/2. Functionally, catalyzes the hydrolysis of N-formyl-L-kynurenine to L-kynurenine, the second step in the kynurenine pathway of tryptophan degradation. This Burkholderia ambifaria (strain ATCC BAA-244 / DSM 16087 / CCUG 44356 / LMG 19182 / AMMD) (Burkholderia cepacia (strain AMMD)) protein is Kynurenine formamidase.